A 396-amino-acid chain; its full sequence is Phosphoglycerate kinase (396 aa).

Substrate-binding positions include 21–23 (DFN), R36, 59–62 (HLGR), R118, and R151. ATP is bound by residues K201, G292, E323, and 349–352 (GGDS).

The protein belongs to the phosphoglycerate kinase family. As to quaternary structure, monomer.

It localises to the cytoplasm. The enzyme catalyses (2R)-3-phosphoglycerate + ATP = (2R)-3-phospho-glyceroyl phosphate + ADP. The protein operates within carbohydrate degradation; glycolysis; pyruvate from D-glyceraldehyde 3-phosphate: step 2/5. This Leptospira interrogans serogroup Icterohaemorrhagiae serovar copenhageni (strain Fiocruz L1-130) protein is Phosphoglycerate kinase.